The primary structure comprises 323 residues: Small ribosomal subunit protein mS35 (323 aa).

Residues 31-59 (PVPTPSLPERTPGNERPPRRKALPPRTEK) are disordered. Residues 257 to 321 (SSERNILETL…YKESVKRLLN (65 aa)) are a coiled coil.

This sequence belongs to the mitochondrion-specific ribosomal protein mS35 family. In terms of assembly, component of the mitochondrial small ribosomal subunit (mt-SSU). Mature mammalian 55S mitochondrial ribosomes consist of a small (28S) and a large (39S) subunit. The 28S small subunit contains a 12S ribosomal RNA (12S mt-rRNA) and 30 different proteins. The 39S large subunit contains a 16S rRNA (16S mt-rRNA), a copy of mitochondrial valine transfer RNA (mt-tRNA(Val)), which plays an integral structural role, and 52 different proteins.

Its subcellular location is the mitochondrion. The chain is Small ribosomal subunit protein mS35 from Homo sapiens (Human).